A 281-amino-acid chain; its full sequence is Microtubule-associated protein RP/EB family member 3 (281 aa).

The 103-residue stretch at 14–116 (NLSRHDMLAW…FIQWFKKFFD (103 aa)) folds into the Calponin-homology (CH) domain. The segment at 157 to 181 (VPQRTSPTGPKNMQTSGRLSNVAPP) is disordered. Residues 158–175 (PQRTSPTGPKNMQTSGRL) show a composition bias toward polar residues. Serine 162 and serine 176 each carry phosphoserine. The EB1 C-terminal domain occupies 194–264 (GGHETDAQIL…LYATEEGFAP (71 aa)). Residues 217–260 (DGLEKERDFYFSKLRDIELICQEHESENSPVISGIIGILYATEE) are APC-binding. A DCTN1-binding region spans residues 217–281 (DGLEKERDFY…EHQQEDQDEY (65 aa)). Positions 261 to 281 (GFAPPEDDEIEEHQQEDQDEY) are disordered. A compositionally biased stretch (basic and acidic residues) spans 272–281 (EHQQEDQDEY).

Belongs to the MAPRE family. In terms of assembly, homodimer. Heterodimer with MAPRE1. Binds monomeric and polymerized GTP-bound tubulin. Interacts with APC2. Interacts with DCTN1 and SRCIN1. Binds to the C-terminal domain of APC. Interacts (via C-terminus) with CLIP1. Interacts with SLAIN2 and SLAIN1. Interacts with AKAP9. Interacts with PDE4DIP. Interacts with PDE4DIP isoform 13/MMG8/SMYLE; this interaction is required for its recruitment to the Golgi apparatus. Predominantly expressed in brain and muscle.

The protein resides in the cytoplasm. It localises to the cytoskeleton. In terms of biological role, plus-end tracking protein (+TIP) that binds to the plus-end of microtubules and regulates the dynamics of the microtubule cytoskeleton. Promotes microtubule growth. May be involved in spindle function by stabilizing microtubules and anchoring them at centrosomes. Also acts as a regulator of minus-end microtubule organization: interacts with the complex formed by AKAP9 and PDE4DIP, leading to recruit CAMSAP2 to the Golgi apparatus, thereby tethering non-centrosomal minus-end microtubules to the Golgi, an important step for polarized cell movement. Promotes elongation of CAMSAP2-decorated microtubule stretches on the minus-end of microtubules. The protein is Microtubule-associated protein RP/EB family member 3 (MAPRE3) of Homo sapiens (Human).